Reading from the N-terminus, the 406-residue chain is chitinase-like effector (406 aa).

The first 23 residues, 1 to 23, serve as a signal peptide directing secretion; the sequence is MLTLLPSLILLLSTLSLSTPANA. In terms of domain architecture, GH18 spans 26–405; it reads AIAKAYYPGW…DAVRHGAGFK (380 aa). Positions 138 and 384 each coordinate chitin.

The protein belongs to the glycosyl hydrolase 18 family.

The protein localises to the secreted. Its function is as follows. Catalytically impaired chitinase that binds efficiently to chitin, but not to chitosan, xylan, or cellulose. Despite the lack of chitinolytic activity, retains substrate binding specificity and acts as an effector to prevent chitin-triggered immunity by sequestering immunogenic chitin fragments. This is chitinase-like effector (Chi) from Moniliophthora roreri (Frosty pod rot fungus).